A 247-amino-acid chain; its full sequence is MINNYIDITVRLLENILDNEADYVKEAGAKVAESIENDGVIHLFGCGHSHILTEEVFYRAGGLAAIHPILHEPLMLHEGAAASSVLERKNDYAKTFMAEEDIRPGDIMIVLSTSGRNPVPIDVAEIAREKGAFVIVITSLQYSASQKSRHTSGKRLSDAGDIVIDNGAVKGDAVLKSANFDIAFAPTSTVTGAVILQSIFAEAIETMVNDNFTPPVFISGNVENADAHNQALVDKYNERIPLLGMNL.

Residues 31–214 (VAESIENDGV…ETMVNDNFTP (184 aa)) enclose the SIS domain.

This sequence belongs to the UPF0309 family.

In Listeria monocytogenes serotype 4b (strain CLIP80459), this protein is UPF0309 protein Lm4b_02611.